A 541-amino-acid chain; its full sequence is Membrane protein insertase YidC (541 aa).

The next 5 helical transmembrane spans lie at 6–26 (NILLIGLLFVSFLLWQQWQAD), 349–369 (FVGNWGVAIILITLTVRGLLF), 420–440 (GGCLPILLQMPIFIALYWVLL), 457–477 (LSVQDPYYILPLLMGVSMFVM), and 500–520 (VIFTVFFLWFPSGLVLYWLVG).

It belongs to the OXA1/ALB3/YidC family. Type 1 subfamily. Interacts with the Sec translocase complex via SecD. Specifically interacts with transmembrane segments of nascent integral membrane proteins during membrane integration.

The protein resides in the cell inner membrane. Its function is as follows. Required for the insertion and/or proper folding and/or complex formation of integral membrane proteins into the membrane. Involved in integration of membrane proteins that insert both dependently and independently of the Sec translocase complex, as well as at least some lipoproteins. Aids folding of multispanning membrane proteins. The sequence is that of Membrane protein insertase YidC from Shewanella sp. (strain MR-7).